We begin with the raw amino-acid sequence, 526 residues long: NAD(P)H-quinone oxidoreductase subunit 2 (526 aa).

14 helical membrane passes run Ile-16–Leu-36, Trp-43–Trp-63, Leu-80–Val-100, Leu-110–Ala-130, Leu-133–Tyr-153, Leu-168–Leu-188, Leu-212–Val-232, Pro-246–Ile-266, Trp-280–Leu-300, Leu-308–Thr-328, Ile-336–Phe-356, Leu-380–Gly-400, Ile-402–Ile-422, and Val-468–Phe-488.

This sequence belongs to the complex I subunit 2 family. In terms of assembly, NDH-1 can be composed of about 15 different subunits; different subcomplexes with different compositions have been identified which probably have different functions.

It localises to the cellular thylakoid membrane. The catalysed reaction is a plastoquinone + NADH + (n+1) H(+)(in) = a plastoquinol + NAD(+) + n H(+)(out). The enzyme catalyses a plastoquinone + NADPH + (n+1) H(+)(in) = a plastoquinol + NADP(+) + n H(+)(out). Its function is as follows. NDH-1 shuttles electrons from an unknown electron donor, via FMN and iron-sulfur (Fe-S) centers, to quinones in the respiratory and/or the photosynthetic chain. The immediate electron acceptor for the enzyme in this species is believed to be plastoquinone. Couples the redox reaction to proton translocation, and thus conserves the redox energy in a proton gradient. Cyanobacterial NDH-1 also plays a role in inorganic carbon-concentration. The sequence is that of NAD(P)H-quinone oxidoreductase subunit 2 from Trichodesmium erythraeum (strain IMS101).